The following is a 452-amino-acid chain: Retinoid-inducible serine carboxypeptidase (452 aa).

An N-terminal signal peptide occupies residues 1–28 (MELSRRICLVRLWLLLLSFLLGFSAGSA). Residues Asn-64, Asn-102, and Asn-126 are each glycosylated (N-linked (GlcNAc...) asparagine). Ser-167 is a catalytic residue. Asn-192 and Asn-362 each carry an N-linked (GlcNAc...) asparagine glycan. Catalysis depends on residues Asp-371 and His-431.

Belongs to the peptidase S10 family.

The protein resides in the secreted. Functionally, may be involved in vascular wall and kidney homeostasis. This Mus musculus (Mouse) protein is Retinoid-inducible serine carboxypeptidase (Scpep1).